The chain runs to 748 residues: Disintegrin and metalloproteinase domain-containing protein 10 (748 aa).

An N-terminal signal peptide occupies residues 1 to 19 (MVLLRVLILLLSWAAGMGG). Positions 20–213 (QYGNPLNKYI…NGPELLRKKR (194 aa)) are excised as a propeptide. The Extracellular portion of the chain corresponds to 20–672 (QYGNPLNKYI…SPELYENIAE (653 aa)). A Cysteine switch motif is present at residues 171-178 (GGCADHSV). Cysteine 173 lines the Zn(2+) pocket. Residues 220 to 456 (NTCQLYIQTD…KRNNCFVESG (237 aa)) enclose the Peptidase M12B domain. 17 disulfides stabilise this stretch: cysteine 222-cysteine 313, cysteine 344-cysteine 451, cysteine 399-cysteine 435, cysteine 460-cysteine 495, cysteine 471-cysteine 484, cysteine 473-cysteine 479, cysteine 483-cysteine 515, cysteine 503-cysteine 511, cysteine 510-cysteine 536, cysteine 524-cysteine 543, cysteine 530-cysteine 562, cysteine 555-cysteine 567, cysteine 572-cysteine 598, cysteine 580-cysteine 607, cysteine 582-cysteine 597, cysteine 594-cysteine 639, and cysteine 632-cysteine 645. N-linked (GlcNAc...) asparagine glycosylation is found at asparagine 267 and asparagine 278. Residue histidine 383 coordinates Zn(2+). Glutamate 384 is a catalytic residue. Zn(2+) is bound by residues histidine 387 and histidine 393. Asparagine 439 carries an N-linked (GlcNAc...) asparagine glycan. The Disintegrin domain maps to 457–551 (QPICGNGMVE…LCPASDPKPN (95 aa)). Asparagine 551 carries an N-linked (GlcNAc...) asparagine glycan. A helical transmembrane segment spans residues 673–693 (WIVAHWWAVLLMGIALIMLMA). Residues 694–748 (GFIKICSVHTPSSNPKLPPPKPLPGTLKRRRPPQPIQQPQRQRPRESYQMGHMRR) lie on the Cytoplasmic side of the membrane. The disordered stretch occupies residues 704 to 748 (PSSNPKLPPPKPLPGTLKRRRPPQPIQQPQRQRPRESYQMGHMRR). The short motif at 708-715 (PKLPPPKP) is the SH3-binding element. Position 719 is a phosphothreonine; by FAM20C (threonine 719). The SH3-binding motif lies at 722–728 (RRRPPQP). The interaction with AP2A1, AP2A2 and AP2M1 stretch occupies residues 734-748 (RQRPRESYQMGHMRR).

Forms a ternary EFNA5-EPHA3-ADAM10 complex mediating EFNA5 extracellular domain shedding by ADAM10 which regulates the EFNA5-EPHA3 complex internalization and function, the cleavage occurs in trans, with ADAM10 and its substrate being on the membranes of opposing cells. Interacts with the clathrin adapter AP2 complex subunits AP2A1, AP2A2, AP2B1, and AP2M1; this interaction facilitates ADAM10 endocytosis from the plasma membrane during long-term potentiation in hippocampal neurons. Forms a ternary complex composed of ADAM10, EPHA4 and CADH1; within the complex, ADAM10 cleaves CADH1 which disrupts adherens junctions. Interacts with EPHA2. Interacts with NGF in a divalent cation-dependent manner. Interacts with TSPAN14; the interaction promotes ADAM10 maturation and cell surface expression. Interacts with TSPAN5, TSPAN10, TSPAN14, TSPAN15, TSPAN17 and TSPAN33; these interactions regulate ADAM10 substrate specificity, endocytosis and turnover. Interacts (via extracellular domain) with TSPAN33 (via extracellular domain) and (via cytoplasmic domain) with AFDN; interaction with TSPAN33 allows the docking of ADAM10 to zonula adherens through a PDZ11-dependent interaction between TSPAN33 and PLEKHA7 while interaction with AFDN locks ADAM10 at zonula adherens. Interacts with DLG1; this interaction recruits ADAM10 to the cell membrane during long-term depression in hippocampal neurons. Interacts (via extracellular domain) with BACE1 (via extracellular domain). Interacts with FAM171A1. In terms of assembly, (Microbial infection) Interacts with S.aureus hly; this interaction is necessary for toxin pore formation, disruption of focal adhesions and S.aureus hly-mediated cytotoxicity. Zn(2+) serves as cofactor. In terms of processing, the precursor is cleaved by furin and PCSK7. As to expression, expressed in the brain (at protein level). Expressed in spleen, lymph node, thymus, peripheral blood leukocyte, bone marrow, cartilage, chondrocytes and fetal liver.

It localises to the cell membrane. Its subcellular location is the golgi apparatus membrane. It is found in the cytoplasmic vesicle. The protein localises to the clathrin-coated vesicle. The protein resides in the cell projection. It localises to the axon. Its subcellular location is the dendrite. It is found in the cell junction. The protein localises to the adherens junction. The protein resides in the cytoplasm. It carries out the reaction Endopeptidase of broad specificity.. Catalytically inactive when the propeptide is intact and associated with the mature enzyme. The disintegrin and cysteine-rich regions modulate access of substrates to exerts an inhibitory effect on the cleavage of ADAM10 substrates. Transmembrane metalloprotease which mediates the ectodomain shedding of a myriad of transmembrane proteins, including adhesion proteins, growth factor precursors and cytokines being essential for development and tissue homeostasis. Associates with six members of the tetraspanin superfamily TspanC8 which regulate its exit from the endoplasmic reticulum and its substrate selectivity. Cleaves the membrane-bound precursor of TNF-alpha at '76-Ala-|-Val-77' to its mature soluble form. Responsible for the proteolytical release of soluble JAM3 from endothelial cells surface. Responsible for the proteolytic release of several other cell-surface proteins, including heparin-binding epidermal growth-like factor, ephrin-A2, CD44, CDH2 and for constitutive and regulated alpha-secretase cleavage of amyloid precursor protein (APP). Contributes to the normal cleavage of the cellular prion protein. Involved in the cleavage of the adhesion molecule L1 at the cell surface and in released membrane vesicles, suggesting a vesicle-based protease activity. Also controls the proteolytic processing of Notch and mediates lateral inhibition during neurogenesis. Required for the development of type 1 transitional B cells into marginal zone B cells, probably by cleaving Notch. Responsible for the FasL ectodomain shedding and for the generation of the remnant ADAM10-processed FasL (FasL APL) transmembrane form. Also cleaves the ectodomain of the integral membrane proteins CORIN and ITM2B. Mediates the proteolytic cleavage of LAG3, leading to release the secreted form of LAG3. Mediates the proteolytic cleavage of IL6R and IL11RA, leading to the release of secreted forms of IL6R and IL11RA. Enhances the cleavage of CHL1 by BACE1. Cleaves NRCAM. Cleaves TREM2, resulting in shedding of the TREM2 ectodomain. Involved in the development and maturation of glomerular and coronary vasculature. During development of the cochlear organ of Corti, promotes pillar cell separation by forming a ternary complex with CADH1 and EPHA4 and cleaving CADH1 at adherens junctions. May regulate the EFNA5-EPHA3 signaling. Regulates leukocyte transmigration as a sheddase for the adherens junction protein VE-cadherin/CDH5 in endothelial cells. Its function is as follows. (Microbial infection) Promotes the cytotoxic activity of S.aureus hly by binding to the toxin at zonula adherens and promoting formation of toxin pores. The chain is Disintegrin and metalloproteinase domain-containing protein 10 from Homo sapiens (Human).